Reading from the N-terminus, the 514-residue chain is MSIQEEIKKRRTFAIISHPDAGKTTITEQLLYFGGEIREAGTVKGKKSGTFAKSDWMDIEKQRGISVTSSVMQFDYAGKRVNILDTPGHEDFSEDTYRTLMAVDAAVMVVDSAKGIEAQTKKLFEVVKHRGIPVFTFINKLDRDGREPLELLEELEEVLGIASFPMNWPIGMGKAFEGLYDLHNNRLELYKGENRFADLEEGAKLFANNPFYEQVLDDIELLQEAGNEFSEEAILSGELTPVFFGSALTNFGVQTFLDTFLEFAPEPHGHKTKEGQMIDPLEKDFSGFVFKIQANMDPRHRDRIAFVRIVSGEFVKGMGVNLTRTGKGAKLSNVTQFMAESRENVQNAVAGDIIGVYDTGTYQVGDTLTVGKHKFEFEPLPTFTPELFMKVSPKNVMKQKSFHKGMEQLVQEGAVQLYRNYQTGEYMLGAVGQLQFEVFKHRMEGEYNAEVIMTPMGKKTVRWIKEEDLDQRMSSSRNILAKDRFDQPVFLFENDFALRWFADKYPDVQLEEKM.

The region spanning lysine 8–histidine 268 is the tr-type G domain. GTP is bound by residues serine 17–threonine 24, aspartate 85–histidine 89, and asparagine 139–aspartate 142.

It belongs to the TRAFAC class translation factor GTPase superfamily. Classic translation factor GTPase family. PrfC subfamily.

It is found in the cytoplasm. Its function is as follows. Increases the formation of ribosomal termination complexes and stimulates activities of RF-1 and RF-2. It binds guanine nucleotides and has strong preference for UGA stop codons. It may interact directly with the ribosome. The stimulation of RF-1 and RF-2 is significantly reduced by GTP and GDP, but not by GMP. The chain is Peptide chain release factor 3 from Streptococcus uberis (strain ATCC BAA-854 / 0140J).